The primary structure comprises 316 residues: MSGDTCLCPASGAKPKLSGFKGGGLGNKYVQLNVGGSLYYTTVRALTRHDTMLKAMFSGRMEVLTDKEGWILIDRCGKHFGTILNYLRDDTITLPQNRQEIKELMAEAKYYLIQGLVNMCQSALQDKKDSYQPVCNIPIITSLKEEERLIESSTKPVVKLLYNRSNNKYSYTSNSDDHLLKNIELFDKLSLRFNGRVLFIKDVIGDEICCWSFYGQGRKLAEVCCTSIVYATEKKQTKVEFPEARIYEETLNVLLYETPRVPDNSLLEATSRSRSQASPSEDEETFELRDRVRRIHVKRYSTYDDRQLGHQSTHRD.

Residues K28–Q96 form the BTB domain. Polar residues predominate over residues E268–P279. Residues E268–E287 are disordered. A Phosphoserine modification is found at S278. S280 is subject to Phosphoserine; by CK2.

It belongs to the BACURD family. Component of the BCR(TNFAIP1) E3 ubiquitin ligase complex, at least composed of CUL3, TNFAIP1/BACURD2 and RBX1. Interacts with RHOA; with a preference for RhoA-GDP. Interacts with RHOB. Interacts with PCNA. Interacts with CSNK2B. In terms of processing, phosphorylation at Ser-280 by CK2 facilitates the nucleus localization and increases interaction with PCNA.

It localises to the cytoplasm. The protein resides in the nucleus. It is found in the endosome. The protein operates within protein modification; protein ubiquitination. In terms of biological role, substrate-specific adapter of a BCR (BTB-CUL3-RBX1) E3 ubiquitin-protein ligase complex involved in regulation of cytoskeleton structure. The BCR(TNFAIP1) E3 ubiquitin ligase complex mediates the ubiquitination of RHOA, leading to its degradation by the proteasome, thereby regulating the actin cytoskeleton and cell migration. Its interaction with RHOB may regulate apoptosis. May enhance the PCNA-dependent DNA polymerase delta activity. This Homo sapiens (Human) protein is BTB/POZ domain-containing adapter for CUL3-mediated RhoA degradation protein 2 (TNFAIP1).